A 636-amino-acid chain; its full sequence is MTHTAAGAPRDAKTAIHAPSSRMALMLGALGVVYGDIGTSPLYTLRACLNTIDDLQPAHVLGVLSILFWLLMIVVSLKYVTLVLRADNRGEGGTLALLELAVRGREGRARWLLIVLGIFGAALFYGDSMITPAISVLSALEGISIVSHTLEPWVVPVALVVLVALFAIQSHGTGAVGKLFGPIMALWFATLAVLGGYQIWLTPEVLAALNPVWALRFIAEFPVMSFLLLGAVVLALTGAEALYADMGHFGRPAIRRAWFAMVLPALTLCYFGQGALLLRDPAAIRNPFFLMAPEWGLAALVGLATVATVVASQAVISGAFSVTRQAVQLGFWPRMQILHTSAVEKGQIYLPQVNALLLCAVLVLVLLFRNSENLAAAYGFAVTGTMLTTSVLAFAVLPRDSTGGKRVLWMVLLGALLVIDILLFGANIFKIHEGGWLPLLVGVVVFTLMMTWRRGRRLLADMQARDRQPLREFMTQLEAFPPARVQGTAIFMTMNAGNVPPALLHNLKHNKVLHDHVLFLSIRVADVPYVSEDERFEMHKISASSWQASINYGFKEDPDVPDALRQVAEAYPEIDLEPMRTSFYLSRQTVVAARRPAMARWRRALFAFMARNSTRSTRFFKIPPNRVVEMGMQVEL.

The next 12 membrane-spanning stretches (helical) occupy residues methionine 23–tyrosine 43, proline 57–leucine 77, tryptophan 111–threonine 131, histidine 148–isoleucine 168, leucine 179–isoleucine 199, phenylalanine 217–threonine 237, tryptophan 258–leucine 278, proline 287–alanine 307, isoleucine 348–phenylalanine 368, alanine 377–leucine 397, tryptophan 409–phenylalanine 429, and isoleucine 431–threonine 451.

It belongs to the HAK/KUP transporter (TC 2.A.72) family.

The protein resides in the cell inner membrane. It carries out the reaction K(+)(in) + H(+)(in) = K(+)(out) + H(+)(out). Transport of potassium into the cell. Likely operates as a K(+):H(+) symporter. The chain is Probable potassium transport system protein Kup from Bordetella bronchiseptica (strain ATCC BAA-588 / NCTC 13252 / RB50) (Alcaligenes bronchisepticus).